Reading from the N-terminus, the 374-residue chain is NADH-quinone oxidoreductase subunit D 1 (374 aa).

This sequence belongs to the complex I 49 kDa subunit family. As to quaternary structure, NDH-1 is composed of 14 different subunits. Subunits NuoB, C, D, E, F, and G constitute the peripheral sector of the complex.

The protein resides in the cell membrane. The catalysed reaction is a quinone + NADH + 5 H(+)(in) = a quinol + NAD(+) + 4 H(+)(out). NDH-1 shuttles electrons from NADH, via FMN and iron-sulfur (Fe-S) centers, to quinones in the respiratory chain. The immediate electron acceptor for the enzyme in this species is believed to be ubiquinone. Couples the redox reaction to proton translocation (for every two electrons transferred, four hydrogen ions are translocated across the cytoplasmic membrane), and thus conserves the redox energy in a proton gradient. This chain is NADH-quinone oxidoreductase subunit D 1, found in Roseiflexus sp. (strain RS-1).